The sequence spans 105 residues: Small ribosomal subunit protein uS10 (105 aa).

This sequence belongs to the universal ribosomal protein uS10 family. Part of the 30S ribosomal subunit.

Its function is as follows. Involved in the binding of tRNA to the ribosomes. This is Small ribosomal subunit protein uS10 from Rickettsia felis (strain ATCC VR-1525 / URRWXCal2) (Rickettsia azadi).